Reading from the N-terminus, the 155-residue chain is Cyanate hydratase (155 aa).

Residues R95, E98, and S121 contribute to the active site.

This sequence belongs to the cyanase family.

It carries out the reaction cyanate + hydrogencarbonate + 3 H(+) = NH4(+) + 2 CO2. Its function is as follows. Catalyzes the reaction of cyanate with bicarbonate to produce ammonia and carbon dioxide. The polypeptide is Cyanate hydratase (Pseudomonas syringae pv. syringae (strain B728a)).